Reading from the N-terminus, the 72-residue chain is MNWMILLWITLGIVIGIAIGFFIARKTMMSYLKKNPPINEQMLRVMLMQMGQNPSQKKINQMMKAMQKQQSK.

The helical transmembrane segment at 3–23 (WMILLWITLGIVIGIAIGFFI) threads the bilayer.

The protein belongs to the UPF0154 family.

It is found in the membrane. In Halalkalibacterium halodurans (strain ATCC BAA-125 / DSM 18197 / FERM 7344 / JCM 9153 / C-125) (Bacillus halodurans), this protein is UPF0154 protein BH2350.